A 137-amino-acid polypeptide reads, in one-letter code: NADPH-dependent 7-cyano-7-deazaguanine reductase (137 aa).

Residue C51 is the Thioimide intermediate of the active site. Catalysis depends on D58, which acts as the Proton donor. Substrate is bound by residues 73–75 (VEL) and 92–93 (HE).

The protein belongs to the GTP cyclohydrolase I family. QueF type 1 subfamily.

The protein resides in the cytoplasm. It carries out the reaction 7-aminomethyl-7-carbaguanine + 2 NADP(+) = 7-cyano-7-deazaguanine + 2 NADPH + 3 H(+). Its pathway is tRNA modification; tRNA-queuosine biosynthesis. In terms of biological role, catalyzes the NADPH-dependent reduction of 7-cyano-7-deazaguanine (preQ0) to 7-aminomethyl-7-deazaguanine (preQ1). This is NADPH-dependent 7-cyano-7-deazaguanine reductase from Gloeobacter violaceus (strain ATCC 29082 / PCC 7421).